The sequence spans 542 residues: Isocitrate lyase (542 aa).

102–104 lines the substrate pocket; it reads SGW. Position 170 (Asp-170) interacts with Mg(2+). Catalysis depends on Cys-208, which acts as the Proton acceptor. Substrate is bound by residues 209 to 210, Arg-245, 428 to 432, and Thr-462; these read GH and NLSPS.

The protein belongs to the isocitrate lyase/PEP mutase superfamily. Isocitrate lyase family. As to quaternary structure, homotetramer. Mg(2+) serves as cofactor.

The protein resides in the glyoxysome. It catalyses the reaction D-threo-isocitrate = glyoxylate + succinate. The enzyme catalyses (2S,3R)-3-hydroxybutane-1,2,3-tricarboxylate = pyruvate + succinate. Its pathway is carbohydrate metabolism; glyoxylate cycle; (S)-malate from isocitrate: step 1/2. Its function is as follows. Catalyzes the formation of succinate and glyoxylate from isocitrate, a key step of the glyoxylate cycle, which operates as an anaplerotic route for replenishing the tricarboxylic acid cycle. Required for growth on ethanol or acetate, but dispensable when fermentable carbon sources are available. Also acts on 2-methylisocitrate. The sequence is that of Isocitrate lyase from Kluyveromyces lactis (strain ATCC 8585 / CBS 2359 / DSM 70799 / NBRC 1267 / NRRL Y-1140 / WM37) (Yeast).